A 641-amino-acid polypeptide reads, in one-letter code: Pumilio homolog 24 (641 aa).

The segment at 1–82 (MSSKGLKPQK…LTEARKKKRK (82 aa)) is disordered. The 396-residue stretch at 9-404 (QKSTKRKDTD…RPLLQLLHPN (396 aa)) folds into the PUM-HD domain. 2 stretches are compositionally biased toward basic and acidic residues: residues 14–27 (RKDT…DSLK) and 67–76 (RVQAKELTEA). Pumilio repeat units lie at residues 118 to 153 (KMKG…VLFT), 154 to 189 (ELQP…ACIS), 190 to 225 (SLRG…ELLA), 303 to 340 (QLLT…KIIK), and 341 to 378 (AMKE…IIVR). The tract at residues 427–468 (MDKSETSSKTKDTDGNEIGEETKDEQEDTVAEHSDHEENVTA) is disordered. The span at 428–440 (DKSETSSKTKDTD) shows a compositional bias: basic and acidic residues. Acidic residues predominate over residues 441-455 (GNEIGEETKDEQEDT). Residues 456–468 (VAEHSDHEENVTA) show a composition bias toward basic and acidic residues.

The protein localises to the nucleus. It is found in the nucleolus. Sequence-specific RNA-binding protein that regulates translation and mRNA stability by binding the 3'-UTR of target mRNAs. This chain is Pumilio homolog 24 (APUM24), found in Arabidopsis thaliana (Mouse-ear cress).